Reading from the N-terminus, the 150-residue chain is Protein SprT-like (150 aa).

The region spanning 6–147 (LQKLTEDISE…CGKCRGKIKR (142 aa)) is the SprT-like domain. His-67 provides a ligand contact to Zn(2+). Glu-68 is a catalytic residue. His-71 contacts Zn(2+).

The protein belongs to the SprT family. The cofactor is Zn(2+).

The protein resides in the cytoplasm. The polypeptide is Protein SprT-like (ydcK) (Bacillus subtilis (strain 168)).